A 337-amino-acid polypeptide reads, in one-letter code: UDP-N-acetylenolpyruvoylglucosamine reductase (337 aa).

Positions 17–186 constitute an FAD-binding PCMH-type domain; sequence IEAKAKQFIA…TSVIYKLTKR (170 aa). Arginine 162 is a catalytic residue. The Proton donor role is filled by serine 237. Glutamate 333 is an active-site residue.

Belongs to the MurB family. The cofactor is FAD.

Its subcellular location is the cytoplasm. The enzyme catalyses UDP-N-acetyl-alpha-D-muramate + NADP(+) = UDP-N-acetyl-3-O-(1-carboxyvinyl)-alpha-D-glucosamine + NADPH + H(+). Its pathway is cell wall biogenesis; peptidoglycan biosynthesis. In terms of biological role, cell wall formation. The sequence is that of UDP-N-acetylenolpyruvoylglucosamine reductase from Flavobacterium johnsoniae (strain ATCC 17061 / DSM 2064 / JCM 8514 / BCRC 14874 / CCUG 350202 / NBRC 14942 / NCIMB 11054 / UW101) (Cytophaga johnsonae).